Consider the following 167-residue polypeptide: Probable D-lyxose ketol-isomerase (167 aa).

Residues histidine 69, histidine 71, glutamate 82, and histidine 137 each contribute to the Mn(2+) site.

This sequence belongs to the D-lyxose ketol-isomerase family. In terms of assembly, homodimer. The cofactor is Mn(2+).

The catalysed reaction is D-lyxose = D-xylulose. Sugar isomerase that catalyzes the reversible isomerization of D-lyxose to D-xylulose. In Bacillus subtilis (strain 168), this protein is Probable D-lyxose ketol-isomerase (ydaE).